A 193-amino-acid chain; its full sequence is Dirigent protein 11 (193 aa).

A signal peptide spans 1-33 (MLQITNMATPFLLLLLPLIFSTVLLLTITVTQS). 2 N-linked (GlcNAc...) asparagine glycosylation sites follow: asparagine 78 and asparagine 136.

The protein belongs to the plant dirigent protein family. As to quaternary structure, homodimer.

The protein resides in the secreted. The protein localises to the extracellular space. It localises to the apoplast. Functionally, dirigent proteins impart stereoselectivity on the phenoxy radical-coupling reaction, yielding optically active lignans from two molecules of coniferyl alcohol in the biosynthesis of lignans, flavonolignans, and alkaloids and thus plays a central role in plant secondary metabolism. This is Dirigent protein 11 (DIR11) from Arabidopsis thaliana (Mouse-ear cress).